The primary structure comprises 639 residues: MTETKRYALLEAADHPAALRNLPEDRLPELAEELRGYLLESVSRSGGHLAAGLGTVELTIALHYVFNTPEDKLVWDVGHQAYPHKILTGRRARLPTIRKKGGLSAFPNRAESPYDCFGVGHSSTSISAALGMAVAAALERRPIHAVAIIGDGGLTGGMAFEALNHAGTLDANLLIILNDNEMSISPNVGALNNYLAKILSGKFYSSVRESGKHLLGRHMPGVWELARRAEEHVKGMVAPGTLFEELGFNYFGPIDGHDLDTLITTLRNLRDQKGPRFLHVVTRKGKGYAPAEKDPVAYHGVGAFDLDADELPKSKPGTPSYTEVFGQWLCDMAARDRRLLGITPAMREGSGLVEFSQRFPDRYFDVGIAEQHAVTFAAGQASEGYKPVVAIYSTFLQRAYDQLIHDVALQNLPVLFAIDRAGLVGPDGPTHAGSFDLSFMRCIPNMLIMAPSDENECRQMLYTGFIHDGPAAVRYPRGRGPGVRPEETMTAFPVGKGEVRLRGKGTAILAFGTPLAAALAVGERIGATVANMRFVKPLDEALILELAATHDRIVTVEENAIAGGAGSAVGEFLAAQHCGIPVCHIGLKDEFLDQGTREELLAIAGLDQAGIARSIDAFIQATAAADKPRRARGQAKDKH.

Thiamine diphosphate-binding positions include His79 and 120–122 (GHS). Asp151 is a Mg(2+) binding site. Residues 152–153 (GG), Asn180, Tyr288, and Glu370 contribute to the thiamine diphosphate site. Asn180 contacts Mg(2+).

It belongs to the transketolase family. DXPS subfamily. In terms of assembly, homodimer. Mg(2+) is required as a cofactor. Requires thiamine diphosphate as cofactor.

The catalysed reaction is D-glyceraldehyde 3-phosphate + pyruvate + H(+) = 1-deoxy-D-xylulose 5-phosphate + CO2. It participates in metabolic intermediate biosynthesis; 1-deoxy-D-xylulose 5-phosphate biosynthesis; 1-deoxy-D-xylulose 5-phosphate from D-glyceraldehyde 3-phosphate and pyruvate: step 1/1. Its function is as follows. Catalyzes the acyloin condensation reaction between C atoms 2 and 3 of pyruvate and glyceraldehyde 3-phosphate to yield 1-deoxy-D-xylulose-5-phosphate (DXP). This Methylococcus capsulatus (strain ATCC 33009 / NCIMB 11132 / Bath) protein is 1-deoxy-D-xylulose-5-phosphate synthase.